Here is a 424-residue protein sequence, read N- to C-terminus: Mitogen-activated protein kinase mpkA (424 aa).

One can recognise a Protein kinase domain in the interval 23–314 (YNVTKELGQG…VEEALEHPYL (292 aa)). ATP contacts are provided by residues 29–37 (LGQGAYGIV) and lysine 52. The disordered stretch occupies residues 375–424 (QQIAQQTNVPIPDHQQGGWKQEEPKPQEVHAAGGHVNDLESSLQRGMDVQ).

The protein belongs to the protein kinase superfamily. Ser/Thr protein kinase family. In terms of assembly, interacts with flbB, flbC, brlA, and rasB. Interacts with fmqA and fmqC. Interacts with hsp90. It depends on Mg(2+) as a cofactor. Phosphorylated by the upstreamm MAPKK mkk2. Phosphorylation is induced during asexual development. Phosphorylation is regulated by rlmA.

The enzyme catalyses L-seryl-[protein] + ATP = O-phospho-L-seryl-[protein] + ADP + H(+). It carries out the reaction L-threonyl-[protein] + ATP = O-phospho-L-threonyl-[protein] + ADP + H(+). Its activity is regulated as follows. Activated by threonine and tyrosine phosphorylation by the upstreamm MAPKK mkk2. Mitogen-activated protein kinase; part of cell wall integrity (CWI) signaling pathway composed of pkcA, the bck1-mkk2-mpka MAPK cascade and the downstream rlmA transcription regulator. The CWI signaling pathway regulates cell wall integrity and pyomelanin formation. CWI also controls oxidative stress response, gliotoxin production, iron adaptation and asexual development. Finally, CWI is constitutively required for A.fumigatus to cope with the temperature increase found in the mammalian lung environment, during infection. MpkA positively modulates the expression of fumiquinazoline cluster during conidiogenesis and directly phosphorylates fmqC, and perhaps also fmqA. The polypeptide is Mitogen-activated protein kinase mpkA (Aspergillus fumigatus (strain ATCC MYA-4609 / CBS 101355 / FGSC A1100 / Af293) (Neosartorya fumigata)).